The chain runs to 474 residues: ATP synthase subunit beta (474 aa).

155 to 162 (GGAGVGKT) provides a ligand contact to ATP.

The protein belongs to the ATPase alpha/beta chains family. In terms of assembly, F-type ATPases have 2 components, CF(1) - the catalytic core - and CF(0) - the membrane proton channel. CF(1) has five subunits: alpha(3), beta(3), gamma(1), delta(1), epsilon(1). CF(0) has three main subunits: a(1), b(2) and c(9-12). The alpha and beta chains form an alternating ring which encloses part of the gamma chain. CF(1) is attached to CF(0) by a central stalk formed by the gamma and epsilon chains, while a peripheral stalk is formed by the delta and b chains.

Its subcellular location is the cell inner membrane. It carries out the reaction ATP + H2O + 4 H(+)(in) = ADP + phosphate + 5 H(+)(out). Produces ATP from ADP in the presence of a proton gradient across the membrane. The catalytic sites are hosted primarily by the beta subunits. In Sorangium cellulosum (strain So ce56) (Polyangium cellulosum (strain So ce56)), this protein is ATP synthase subunit beta.